Here is a 215-residue protein sequence, read N- to C-terminus: Nucleoredoxin-like protein 1 (215 aa).

Residues 1–165 (MADLFLDKIL…VSEIIDRSFL (165 aa)) enclose the Thioredoxin; atypical domain. A compositionally biased stretch (basic and acidic residues) spans 185-194 (IKYKDETTNE). The disordered stretch occupies residues 185 to 215 (IKYKDETTNEKKKRKHCDDEDEGGGGGTEFF).

The protein belongs to the nucleoredoxin family.

It is found in the cell projection. It localises to the cilium. The protein resides in the photoreceptor outer segment. Functionally, plays an important role in retinal cone photoreceptor survival. May play a role in cone cell viability, slowing down cone degeneration, does not seem to play a role in degenerating rods. This Xenopus laevis (African clawed frog) protein is Nucleoredoxin-like protein 1 (nxnl1).